The following is a 685-amino-acid chain: Kinesin-related protein 11 (685 aa).

Residues 4-405 (NISVSVRARP…LKFASRAKKI (402 aa)) enclose the Kinesin motor domain. Positions 36 to 105 (TSLPPPITQP…TTVPASPAPT (70 aa)) are disordered. The segment covering 47–105 (SSLPPISTPIKSSSSSSTSTSAGSLKTPLKTPLKTPLKTPLKTNSTTTNTTVPASPAPT) has biased composition (low complexity). 156 to 163 (GITSSGKT) provides a ligand contact to ATP. Residues 411-488 (VNEILDDKAL…KINNLNKLIL (78 aa)) adopt a coiled-coil conformation. Residues 495 to 568 (NSASKGGSGS…QSTSSLTIGG (74 aa)) are disordered. Residues 511–520 (RSTFVSPSQN) are compositionally biased toward polar residues. Low complexity predominate over residues 533-565 (PNSFSNLLLQSPSQNNNNNSHISPLSQSTSSLT). A coiled-coil region spans residues 574–683 (FESNELIQIQ…LKSKIQEYEV (110 aa)).

This sequence belongs to the TRAFAC class myosin-kinesin ATPase superfamily. Kinesin family.

Its subcellular location is the cytoplasm. It is found in the cytoskeleton. Its function is as follows. Microtubule-associated force-producing protein that plays a role in organelle transport. Its motor activity is directed toward the microtubule's plus end. This is Kinesin-related protein 11 (kif11) from Dictyostelium discoideum (Social amoeba).